Consider the following 482-residue polypeptide: tRNA sulfurtransferase (482 aa).

The 105-residue stretch at 61 to 165 (LVIRDALTRI…DDRLLLIKGR (105 aa)) folds into the THUMP domain. Residues 183 to 184 (LI), lysine 265, glycine 287, and glutamine 296 contribute to the ATP site. Cysteine 344 and cysteine 456 are oxidised to a cystine. Positions 404 to 482 (FGPNDVILDI…GFANVKVYRP (79 aa)) constitute a Rhodanese domain. Cysteine 456 serves as the catalytic Cysteine persulfide intermediate.

This sequence belongs to the ThiI family.

It localises to the cytoplasm. The catalysed reaction is [ThiI sulfur-carrier protein]-S-sulfanyl-L-cysteine + a uridine in tRNA + 2 reduced [2Fe-2S]-[ferredoxin] + ATP + H(+) = [ThiI sulfur-carrier protein]-L-cysteine + a 4-thiouridine in tRNA + 2 oxidized [2Fe-2S]-[ferredoxin] + AMP + diphosphate. It catalyses the reaction [ThiS sulfur-carrier protein]-C-terminal Gly-Gly-AMP + S-sulfanyl-L-cysteinyl-[cysteine desulfurase] + AH2 = [ThiS sulfur-carrier protein]-C-terminal-Gly-aminoethanethioate + L-cysteinyl-[cysteine desulfurase] + A + AMP + 2 H(+). The protein operates within cofactor biosynthesis; thiamine diphosphate biosynthesis. In terms of biological role, catalyzes the ATP-dependent transfer of a sulfur to tRNA to produce 4-thiouridine in position 8 of tRNAs, which functions as a near-UV photosensor. Also catalyzes the transfer of sulfur to the sulfur carrier protein ThiS, forming ThiS-thiocarboxylate. This is a step in the synthesis of thiazole, in the thiamine biosynthesis pathway. The sulfur is donated as persulfide by IscS. This Salmonella typhimurium (strain LT2 / SGSC1412 / ATCC 700720) protein is tRNA sulfurtransferase.